The sequence spans 404 residues: Probable ribosomal oxygenase HI_0396 (404 aa).

The JmjC domain maps to 102-231; that stretch reads ELGQLWNKFG…LIDGISKGFC (130 aa). The Fe cation site is built by His135, Asp137, and His199.

The protein belongs to the ROX family. Fe(2+) serves as cofactor.

Functionally, oxygenase that catalyzes the hydroxylation of a ribosomal protein. This Haemophilus influenzae (strain ATCC 51907 / DSM 11121 / KW20 / Rd) protein is Probable ribosomal oxygenase HI_0396.